We begin with the raw amino-acid sequence, 425 residues long: UDP-N-acetylglucosamine 1-carboxyvinyltransferase (425 aa).

31 to 32 contacts phosphoenolpyruvate; that stretch reads KN. Arginine 100 contacts UDP-N-acetyl-alpha-D-glucosamine. The Proton donor role is filled by cysteine 124. Cysteine 124 carries the post-translational modification 2-(S-cysteinyl)pyruvic acid O-phosphothioketal. UDP-N-acetyl-alpha-D-glucosamine-binding positions include 129 to 133, 170 to 172, aspartate 311, and isoleucine 333; these read RPIDQ and TVT.

This sequence belongs to the EPSP synthase family. MurA subfamily.

The protein localises to the cytoplasm. It carries out the reaction phosphoenolpyruvate + UDP-N-acetyl-alpha-D-glucosamine = UDP-N-acetyl-3-O-(1-carboxyvinyl)-alpha-D-glucosamine + phosphate. It functions in the pathway cell wall biogenesis; peptidoglycan biosynthesis. Functionally, cell wall formation. Adds enolpyruvyl to UDP-N-acetylglucosamine. This Aquifex aeolicus (strain VF5) protein is UDP-N-acetylglucosamine 1-carboxyvinyltransferase.